Consider the following 200-residue polypeptide: Large ribosomal subunit protein uL4 (200 aa).

Positions 43-71 (RAQKTRAEVSGSGKKPWRQKGTGRARSGD) are disordered.

Belongs to the universal ribosomal protein uL4 family. Part of the 50S ribosomal subunit.

One of the primary rRNA binding proteins, this protein initially binds near the 5'-end of the 23S rRNA. It is important during the early stages of 50S assembly. It makes multiple contacts with different domains of the 23S rRNA in the assembled 50S subunit and ribosome. Functionally, forms part of the polypeptide exit tunnel. In Actinobacillus pleuropneumoniae serotype 5b (strain L20), this protein is Large ribosomal subunit protein uL4.